The chain runs to 95 residues: UPF0358 protein BCE_3996 (95 aa).

This sequence belongs to the UPF0358 family.

The protein is UPF0358 protein BCE_3996 of Bacillus cereus (strain ATCC 10987 / NRS 248).